We begin with the raw amino-acid sequence, 372 residues long: Biotin synthase (372 aa).

Residues 73–308 (CCGNTVDLCS…QQIIRYAGGR (236 aa)) form the Radical SAM core domain. Residues C91, C95, and C98 each coordinate [4Fe-4S] cluster. Residues C136, C173, C233, and R303 each contribute to the [2Fe-2S] cluster site.

The protein belongs to the radical SAM superfamily. Biotin synthase family. As to quaternary structure, homodimer. Requires [4Fe-4S] cluster as cofactor. It depends on [2Fe-2S] cluster as a cofactor.

It catalyses the reaction (4R,5S)-dethiobiotin + (sulfur carrier)-SH + 2 reduced [2Fe-2S]-[ferredoxin] + 2 S-adenosyl-L-methionine = (sulfur carrier)-H + biotin + 2 5'-deoxyadenosine + 2 L-methionine + 2 oxidized [2Fe-2S]-[ferredoxin]. It functions in the pathway cofactor biosynthesis; biotin biosynthesis; biotin from 7,8-diaminononanoate: step 2/2. Functionally, catalyzes the conversion of dethiobiotin (DTB) to biotin by the insertion of a sulfur atom into dethiobiotin via a radical-based mechanism. The sequence is that of Biotin synthase from Cyanothece sp. (strain PCC 7425 / ATCC 29141).